The following is a 128-amino-acid chain: uncharacterized protein (128 aa).

Basic and acidic residues predominate over residues 1–11; sequence MDNKKKEENPS. The tract at residues 1-40 is disordered; it reads MDNKKKEENPSKSDTSISLPPSSTGEALQNYTESEWNASD. Polar residues predominate over residues 12-37; the sequence is KSDTSISLPPSSTGEALQNYTESEWN.

This is an uncharacterized protein from Caenorhabditis elegans.